Here is a 537-residue protein sequence, read N- to C-terminus: Leucine-rich repeat LGI family member 4 (537 aa).

The N-terminal stretch at 1–19 (MGGAGILLLLLAGAGVVVA) is a signal peptide. LRR repeat units follow at residues 53-74 (TLLSLSLVRTGVTQLKAGSFLR), 77-98 (SLHLLLFTSNSFSVIEDDAFAG), 101-122 (HLQYLFIEDNEIGSISKNALRG), and 125-146 (SLTHLSLANNHLETLPRFLFRG). One can recognise an LRRCT domain in the interval 158–208 (NPFQCDCRVLWLLQWMPTVNASVGTGACAGPASLSHMQLHHLDPKTFKCRA). Residue Asn177 is glycosylated (N-linked (GlcNAc...) asparagine). EAR repeat units follow at residues 210 to 252 (ELSW…SWDY), 256 to 298 (RFRP…ARPS), 302 to 349 (RLAP…CRDG), 351 to 394 (GFYP…HWTG), 396 to 439 (RFER…RWDG), 441 to 483 (MFRL…RLEP), and 487 to 532 (LLEP…QHHE).

In terms of assembly, can bind to ADAM11, ADAM22 and ADAM23. As to expression, widely expressed, with highest expression in brain.

It localises to the secreted. Component of Schwann cell signaling pathway(s) that controls axon segregation and myelin formation. This Homo sapiens (Human) protein is Leucine-rich repeat LGI family member 4 (LGI4).